A 310-amino-acid polypeptide reads, in one-letter code: p-hydroxybenzoic acid efflux pump subunit AaeA (310 aa).

The chain crosses the membrane as a helical span at residues 12–32 (AITLVLVILAFIAIFRAWVYY).

The protein belongs to the membrane fusion protein (MFP) (TC 8.A.1) family.

The protein localises to the cell inner membrane. Functionally, forms an efflux pump with AaeB. This is p-hydroxybenzoic acid efflux pump subunit AaeA from Citrobacter koseri (strain ATCC BAA-895 / CDC 4225-83 / SGSC4696).